Consider the following 140-residue polypeptide: Zinc finger SWIM domain-containing protein 7 (140 aa).

Residues 76–114 (YTCFTSCHYCPCPAFSFTVLRRNESLMCKHLLAVILSQA) form an SWIM-type zinc finger.

It belongs to the SWS1 family.

It localises to the nucleus. Its function is as follows. Involved in early stages of the homologous recombination repair (HRR) pathway of double-stranded DNA breaks arising during DNA replication or induced by DNA-damaging agents. This chain is Zinc finger SWIM domain-containing protein 7 (zswim7), found in Danio rerio (Zebrafish).